Reading from the N-terminus, the 175-residue chain is Ribosome maturation factor RimM (175 aa).

Residues 96 to 175 (EEDYYWHDLI…TITVDWDAGF (80 aa)) form the PRC barrel domain.

Belongs to the RimM family. Binds ribosomal protein uS19.

It localises to the cytoplasm. Functionally, an accessory protein needed during the final step in the assembly of 30S ribosomal subunit, possibly for assembly of the head region. Essential for efficient processing of 16S rRNA. May be needed both before and after RbfA during the maturation of 16S rRNA. It has affinity for free ribosomal 30S subunits but not for 70S ribosomes. This is Ribosome maturation factor RimM from Haemophilus ducreyi (strain 35000HP / ATCC 700724).